A 486-amino-acid chain; its full sequence is Cardiolipin synthase A (486 aa).

The next 2 helical transmembrane spans lie at 3 to 23 and 38 to 58; these read IFYN…IANI and MSWL…WFFF. PLD phosphodiesterase domains are found at residues 219-246 and 399-426; these read VDVR…VDPY and QKGL…DMRS. Catalysis depends on residues His224, Lys226, Asp231, His404, Lys406, and Asp411.

This sequence belongs to the phospholipase D family. Cardiolipin synthase subfamily. ClsA sub-subfamily.

It localises to the cell inner membrane. The catalysed reaction is 2 a 1,2-diacyl-sn-glycero-3-phospho-(1'-sn-glycerol) = a cardiolipin + glycerol. In terms of biological role, catalyzes the reversible phosphatidyl group transfer from one phosphatidylglycerol molecule to another to form cardiolipin (CL) (diphosphatidylglycerol) and glycerol. This Buchnera aphidicola subsp. Acyrthosiphon pisum (strain 5A) protein is Cardiolipin synthase A.